Here is a 1134-residue protein sequence, read N- to C-terminus: Vinculin (1134 aa).

The interval methionine 1–phenylalanine 835 is N-terminal globular head. A Phosphoserine modification is found at serine 97. The tract at residues methionine 168 to alanine 208 is talin-interaction. Lysine 173 is subject to N6-acetyllysine. Tandem repeats lie at residues alanine 259 to asparagine 369, alanine 370 to arginine 479, and alanine 480 to glutamate 589. The 3 X 112 AA tandem repeats stretch occupies residues alanine 259–glutamate 589. Residues serine 260, serine 272, serine 275, serine 288, serine 290, serine 346, and serine 434 each carry the phosphoserine modification. Lysine 496 is modified (N6-acetyllysine). The residue at position 537 (tyrosine 537) is a Phosphotyrosine. 3 positions are modified to phosphoserine: serine 574, serine 579, and serine 600. Threonine 604 and threonine 672 each carry phosphothreonine. Phosphoserine is present on serine 721. Positions methionine 741 to leucine 764 are interaction with ACTN4. Phosphoserine is present on residues serine 795 and serine 809. A Phosphotyrosine modification is found at tyrosine 822. The interval glutamine 836–proline 878 is linker (Pro-rich). Residues glutamate 857–glutamate 887 are disordered. Positions proline 860–proline 876 are enriched in pro residues. A C-terminal tail region spans residues glutamate 879–glutamine 1134. Facilitates phospholipid membrane insertion regions lie at residues arginine 1003–arginine 1046 and alanine 1120–glutamine 1134. At tyrosine 1133 the chain carries Phosphotyrosine; by SRC-type Tyr-kinases.

Belongs to the vinculin/alpha-catenin family. Exhibits self-association properties. Part of a complex composed of THSD1, PTK2/FAK1, TLN1 and VCL. Interacts with APBB1IP and NRAP. Interacts with TLN1. Interacts with CTNNB1 and this interaction is necessary for its localization to the cell-cell junctions and for its function in regulating cell surface expression of E-cadherin. Interacts with SYNM. Interacts with SORBS1. Interacts with CTNNA1. Binds to ACTN4; this interaction triggers conformational changes. Interacts with FLII. In terms of assembly, (Microbial infection) Interacts via its globular head domain with the central portion of S.flexneri IcsA (also called VirG). In terms of processing, phosphorylated; on serines, threonines and tyrosines. Phosphorylation on Tyr-1133 in activated platelets affects head-tail interactions and cell spreading but has no effect on actin binding nor on localization to focal adhesion plaques. Post-translationally, acetylated; mainly by myristic acid but also by a small amount of palmitic acid. As to expression, metavinculin is muscle-specific.

The protein resides in the cell membrane. Its subcellular location is the cell junction. It is found in the adherens junction. The protein localises to the focal adhesion. It localises to the cytoplasm. The protein resides in the cytoskeleton. Its subcellular location is the sarcolemma. It is found in the cell projection. The protein localises to the podosome. In terms of biological role, actin filament (F-actin)-binding protein involved in cell-matrix adhesion and cell-cell adhesion. Regulates cell-surface E-cadherin expression and potentiates mechanosensing by the E-cadherin complex. May also play important roles in cell morphology and locomotion. This is Vinculin (VCL) from Homo sapiens (Human).